A 173-amino-acid polypeptide reads, in one-letter code: MDRYNPPRRNGNSKKNEVVITGGRTQRIDFEKDVNKTTILPAGASVGRRGRGAGWYCEACNETYKDSLSWLDHLNSTQHLRKTRTVIIEKRATLEEVKERMEYWRRQLLEPEKGSEEYSLKERVERYHQELEAKKLRRKQKKVNKEKNSPRLVGENTELAAIMGISSFGSTNL.

A Matrin-type zinc finger spans residues 55 to 85 (WYCEACNETYKDSLSWLDHLNSTQHLRKTRT). The stretch at 119 to 149 (SLKERVERYHQELEAKKLRRKQKKVNKEKNS) forms a coiled coil.

In terms of assembly, component of the 25S U4/U6.U5 tri-snRNP particle, a subcomplex of the spliceosome.

It is found in the cytoplasm. It localises to the cytoskeleton. The protein resides in the microtubule organizing center. Its subcellular location is the spindle pole body. The protein localises to the nucleus. The polypeptide is U4/U6.U5 small nuclear ribonucleoprotein component snu23 (snu23) (Schizosaccharomyces pombe (strain 972 / ATCC 24843) (Fission yeast)).